We begin with the raw amino-acid sequence, 270 residues long: A-type potassium channel modulatory protein KCNIP2 (270 aa).

Residues 1 to 17 (MRGQGRKESLSDSRDLD) show a composition bias toward basic and acidic residues. Residues 1–32 (MRGQGRKESLSDSRDLDGSYDQLTGHPPGPTK) are disordered. Phosphoserine is present on serine 9. Residues cysteine 45 and cysteine 46 are each lipidated (S-palmitoyl cysteine). The EF-hand 1; degenerate domain maps to 81–137 (FELSTVCHRPEGLEQLQEQTKFTRKELQVLYRGFKNECPSGIVNEENFKQIYSQFFP). 3 EF-hand domains span residues 140 to 175 (DSST…ILRG), 176 to 211 (TVDD…IYDM), and 224 to 259 (APRE…DENI). The Ca(2+) site is built by aspartate 153, asparagine 155, aspartate 157, serine 159, aspartate 164, aspartate 189, asparagine 191, aspartate 193, cysteine 195, glutamate 200, aspartate 237, asparagine 239, aspartate 241, and glutamate 248. The segment at 257–270 (ENIMRSMQLFDNVI) is interaction with KCND2.

It belongs to the recoverin family. In terms of assembly, component of heteromultimeric potassium channels. Identified in potassium channel complexes containing KCND1, KCND2, KCND3, KCNIP1, KCNIP2, KCNIP3, KCNIP4, DPP6 and DPP10. The KCND2-KCNIP2 channel complex contains four KCND2 and four KCNIP2 subunits. Interacts with KCND2. Probably part of a complex consisting of KCNIP1, KCNIP2 isoform 3 and KCND2. At least isoform 2 and isoform 3 can self-associate to form homodimers and homotetramers. Isoform 3 interacts with KCNIP1 in a calcium-dependent manner. Interacts with KCND3; each KCNIP2 monomer interacts with two adjacent KCND3 subunits, through both the N-terminal inactivation ball of a KCND3 subunit and a C-terminal helix from the adjacent KCND3 subunit, clamping them together; this interaction modulates the channel gating kinetics. In terms of processing, palmitoylated. Palmitoylation enhances association with the plasma membrane. Expressed in brain. Colocalizes with KCND2 in excitatory neurons including cortical and hippocampal CA1 pyramidal cells. Isoform 3 is expressed in heart and in umbilical vein endothelial cells. Not expressed in fetal heart.

The protein localises to the cell membrane. Regulatory subunit of Kv4/D (Shal)-type voltage-gated rapidly inactivating A-type potassium channels. Modulates channel density, inactivation kinetics and rate of recovery from inactivation in a calcium-dependent and isoform-specific manner. Involved in KCND2 and KCND3 trafficking to the cell surface. May be required for the expression of I(To) currents in the heart. This is A-type potassium channel modulatory protein KCNIP2 from Homo sapiens (Human).